A 527-amino-acid chain; its full sequence is Flavonoid 3',5'-hydroxylase CYP75B138 (527 aa).

A helical transmembrane segment spans residues L6–F26. Residue C459 coordinates heme.

The protein belongs to the cytochrome P450 family. The cofactor is heme. Expressed in young cromes.

It localises to the membrane. It catalyses the reaction a 3',5'-unsubstituted flavanone + 2 reduced [NADPH--hemoprotein reductase] + 2 O2 = a 3',5'-dihydroxyflavanone + 2 oxidized [NADPH--hemoprotein reductase] + 2 H2O + 2 H(+). The enzyme catalyses (2S)-naringenin + 2 reduced [NADPH--hemoprotein reductase] + 2 O2 = (2S)-dihydrotricetin + 2 oxidized [NADPH--hemoprotein reductase] + 2 H2O + 2 H(+). The catalysed reaction is (2R,3R)-dihydrokaempferol + 2 reduced [NADPH--hemoprotein reductase] + 2 O2 = (2R,3R)-dihydromyricetin + 2 oxidized [NADPH--hemoprotein reductase] + 2 H2O + 2 H(+). It carries out the reaction kaempferol + 2 reduced [NADPH--hemoprotein reductase] + 2 O2 = myricetin + 2 oxidized [NADPH--hemoprotein reductase] + 2 H2O + 2 H(+). It functions in the pathway flavonoid metabolism. Its function is as follows. Flavonoid 3',5'-hydroxylase that catalyzes the 3'- and 5'-hydroxylation of flavanones, dihydroflavonols and flavonols. Converts narigenin to dihydrotricetin, dihydrokaempferol to dihydromyricetin and kaempferol to myricetin. This Crocosmia x crocosmiiflora (Montbretia) protein is Flavonoid 3',5'-hydroxylase CYP75B138.